The primary structure comprises 405 residues: Glutamate-pyruvate aminotransferase AlaA (405 aa).

L-alanine is bound by residues G41 and N179. Residue K240 is modified to N6-(pyridoxal phosphate)lysine. R378 is a binding site for L-alanine.

Belongs to the class-I pyridoxal-phosphate-dependent aminotransferase family. In terms of assembly, homodimer. Pyridoxal 5'-phosphate serves as cofactor.

It is found in the cytoplasm. It catalyses the reaction L-alanine + 2-oxoglutarate = pyruvate + L-glutamate. The protein operates within amino-acid biosynthesis; L-alanine biosynthesis. Functionally, involved in the biosynthesis of alanine. Catalyzes the transamination of pyruvate by glutamate, leading to the formation of L-alanine and 2-oxoglutarate. Is also able to catalyze the reverse reaction. This is Glutamate-pyruvate aminotransferase AlaA from Escherichia coli (strain K12).